Consider the following 466-residue polypeptide: MNQGKIVQIIGAIVDVEFPRNNVPKVYNALKIDGTAIILEVQQQLGDGIVRTIALGSTDGLKRNLIATDTGHAITVPVGTGTLGRIMDVLGNPIDEAGPITYTDQWEIHRNAPSYEDQASTTELLETGIKVIDLMCPFAKGGKVGLFGGAGVGKTVNMMELINNIAKAHSGLSVFAGVGERTREGNDFYHEMKDSNVLDKVAMVYGQMNEPPGNRLRVALTGLTMAEYFRDEKDSSGKGKDVLLFIDNIYRYTLAGTEVSALLGRMPSAVGYQPTLAEEMGVLQERITSTANGSITSIQAVYVPADDLTDPSPATTFGHLDSTVTLSRSIAALGIYPAVDPLDSSSRQMDPLIIGEEHYNTTQRVQQTLQKYKDLKDIIAILGMDELSEDDKLAVSRARKIERFFSQPFHVAEVFTGAPGKYVPLKETIRGFKAIVDGEYDHLPEQAFYMVGNIEEVIEKANKMTA.

An ATP-binding site is contributed by 148–155 (GGAGVGKT).

This sequence belongs to the ATPase alpha/beta chains family. In terms of assembly, F-type ATPases have 2 components, CF(1) - the catalytic core - and CF(0) - the membrane proton channel. CF(1) has five subunits: alpha(3), beta(3), gamma(1), delta(1), epsilon(1). CF(0) has three main subunits: a(1), b(2) and c(9-12). The alpha and beta chains form an alternating ring which encloses part of the gamma chain. CF(1) is attached to CF(0) by a central stalk formed by the gamma and epsilon chains, while a peripheral stalk is formed by the delta and b chains.

The protein localises to the cell inner membrane. It carries out the reaction ATP + H2O + 4 H(+)(in) = ADP + phosphate + 5 H(+)(out). Functionally, produces ATP from ADP in the presence of a proton gradient across the membrane. The catalytic sites are hosted primarily by the beta subunits. The sequence is that of ATP synthase subunit beta from Xylella fastidiosa (strain 9a5c).